Consider the following 247-residue polypeptide: Ribonuclease PH (247 aa).

Residues Arg87 and 125-127 (GTR) contribute to the phosphate site.

The protein belongs to the RNase PH family. Homohexameric ring arranged as a trimer of dimers.

It catalyses the reaction tRNA(n+1) + phosphate = tRNA(n) + a ribonucleoside 5'-diphosphate. Phosphorolytic 3'-5' exoribonuclease that plays an important role in tRNA 3'-end maturation. Removes nucleotide residues following the 3'-CCA terminus of tRNAs; can also add nucleotides to the ends of RNA molecules by using nucleoside diphosphates as substrates, but this may not be physiologically important. Probably plays a role in initiation of 16S rRNA degradation (leading to ribosome degradation) during starvation. The chain is Ribonuclease PH from Trichormus variabilis (strain ATCC 29413 / PCC 7937) (Anabaena variabilis).